We begin with the raw amino-acid sequence, 277 residues long: Large ribosomal subunit protein uL2 (277 aa).

Disordered regions lie at residues 1–20 (MAVK…TTAD) and 210–277 (GRSR…RGGK). The segment covering 210–221 (GRSRWLGRKPHQ) has biased composition (basic residues).

Belongs to the universal ribosomal protein uL2 family. In terms of assembly, part of the 50S ribosomal subunit. Forms a bridge to the 30S subunit in the 70S ribosome.

Its function is as follows. One of the primary rRNA binding proteins. Required for association of the 30S and 50S subunits to form the 70S ribosome, for tRNA binding and peptide bond formation. It has been suggested to have peptidyltransferase activity; this is somewhat controversial. Makes several contacts with the 16S rRNA in the 70S ribosome. The polypeptide is Large ribosomal subunit protein uL2 (Deinococcus deserti (strain DSM 17065 / CIP 109153 / LMG 22923 / VCD115)).